Consider the following 92-residue polypeptide: Putative membrane protein insertion efficiency factor (92 aa).

This sequence belongs to the UPF0161 family.

Its subcellular location is the cell inner membrane. Functionally, could be involved in insertion of integral membrane proteins into the membrane. The polypeptide is Putative membrane protein insertion efficiency factor (Synechococcus sp. (strain CC9902)).